The primary structure comprises 307 residues: Methionyl-tRNA formyltransferase (307 aa).

Residue 108 to 111 (SLLP) coordinates (6S)-5,6,7,8-tetrahydrofolate.

This sequence belongs to the Fmt family.

It catalyses the reaction L-methionyl-tRNA(fMet) + (6R)-10-formyltetrahydrofolate = N-formyl-L-methionyl-tRNA(fMet) + (6S)-5,6,7,8-tetrahydrofolate + H(+). Attaches a formyl group to the free amino group of methionyl-tRNA(fMet). The formyl group appears to play a dual role in the initiator identity of N-formylmethionyl-tRNA by promoting its recognition by IF2 and preventing the misappropriation of this tRNA by the elongation apparatus. The sequence is that of Methionyl-tRNA formyltransferase from Stenotrophomonas maltophilia (strain R551-3).